The following is a 309-amino-acid chain: Probable HTH-type transcriptional regulator LtrA (309 aa).

The 61-residue stretch at 1–61 (MNLNLLPDLA…QRTTRKLRLS (61 aa)) folds into the HTH lysR-type domain. Residues 21 to 40 (FSAVARQNGITPSAVSRSVS) constitute a DNA-binding region (H-T-H motif).

Belongs to the LysR transcriptional regulatory family.

The polypeptide is Probable HTH-type transcriptional regulator LtrA (ltrA) (Klebsiella pneumoniae).